Reading from the N-terminus, the 162-residue chain is Protein archease (162 aa).

3 residues coordinate Ca(2+): Asp-34, Asp-161, and Ile-162.

It belongs to the archease family. In terms of assembly, component of the tRNA-splicing ligase complex.

Its function is as follows. Component of the tRNA-splicing ligase complex required to facilitate the enzymatic turnover of catalytic subunit RTCB. Together with ddx1, acts by facilitating the guanylylation of RTCB, a key intermediate step in tRNA ligation. In Danio rerio (Zebrafish), this protein is Protein archease (zbtb8os).